Here is a 562-residue protein sequence, read N- to C-terminus: NAD-dependent malic enzyme (562 aa).

Tyr101 (proton donor) is an active-site residue. Arg154 lines the NAD(+) pocket. The Proton acceptor role is filled by Lys172. A divalent metal cation-binding residues include Glu243, Asp244, and Asp267. NAD(+)-binding residues include Asp267 and Asn415.

This sequence belongs to the malic enzymes family. Homotetramer. Requires Mg(2+) as cofactor. It depends on Mn(2+) as a cofactor.

The enzyme catalyses (S)-malate + NAD(+) = pyruvate + CO2 + NADH. It carries out the reaction oxaloacetate + H(+) = pyruvate + CO2. The chain is NAD-dependent malic enzyme from Idiomarina loihiensis (strain ATCC BAA-735 / DSM 15497 / L2-TR).